Here is a 257-residue protein sequence, read N- to C-terminus: Glycerol-3-phosphate acyltransferase (257 aa).

The next 6 membrane-spanning stretches (helical) occupy residues 7 to 27, 66 to 86, 104 to 124, 140 to 160, 164 to 184, and 203 to 223; these read IVMA…LIGS, ILTL…TYII, AILV…PIFF, ITVD…ILLI, MSLS…VPGI, and YVIK…SLLI.

The protein belongs to the PlsY family. As to quaternary structure, probably interacts with PlsX.

It localises to the cell membrane. It carries out the reaction an acyl phosphate + sn-glycerol 3-phosphate = a 1-acyl-sn-glycero-3-phosphate + phosphate. Its pathway is lipid metabolism; phospholipid metabolism. In terms of biological role, catalyzes the transfer of an acyl group from acyl-phosphate (acyl-PO(4)) to glycerol-3-phosphate (G3P) to form lysophosphatidic acid (LPA). This enzyme utilizes acyl-phosphate as fatty acyl donor, but not acyl-CoA or acyl-ACP. This is Glycerol-3-phosphate acyltransferase from Ureaplasma parvum serovar 3 (strain ATCC 700970).